The chain runs to 113 residues: Tubulin alpha chain (113 aa).

E52 is a binding site for GTP. E52 serves as a coordination point for Mg(2+).

Belongs to the tubulin family. As to quaternary structure, dimer of alpha and beta chains. A typical microtubule is a hollow water-filled tube with an outer diameter of 25 nm and an inner diameter of 15 nM. Alpha-beta heterodimers associate head-to-tail to form protofilaments running lengthwise along the microtubule wall with the beta-tubulin subunit facing the microtubule plus end conferring a structural polarity. Microtubules usually have 13 protofilaments but different protofilament numbers can be found in some organisms and specialized cells. Mg(2+) serves as cofactor.

Its subcellular location is the cytoplasm. It is found in the cytoskeleton. The enzyme catalyses GTP + H2O = GDP + phosphate + H(+). Functionally, tubulin is the major constituent of microtubules, a cylinder consisting of laterally associated linear protofilaments composed of alpha- and beta-tubulin heterodimers. Microtubules grow by the addition of GTP-tubulin dimers to the microtubule end, where a stabilizing cap forms. Below the cap, tubulin dimers are in GDP-bound state, owing to GTPase activity of alpha-tubulin. This Picea abies (Norway spruce) protein is Tubulin alpha chain (TUBA).